A 215-amino-acid polypeptide reads, in one-letter code: MFQSKNIKNFLKNRFRGFYPVVIDVETAGFDPYRDALLEIAIITLRMDDNGFLRIDNKLHFNIIPTPGLNIKKSALKFNKIDPYNPFRAAINERKAIKEIFNTVRLGIKKQSCSKAVVVAHNAYFDHSFLMSAVDRSKIKYNPFHSFSTFDTATLSGLVLGQTVLSKACIIAGIEFNNNYAHSALYDSKKTAELFCEIVNRWKKMGGWPIPKNRK.

The 175-residue stretch at V21 to F195 folds into the Exonuclease domain. 4 residues coordinate Mg(2+): D24, E26, H182, and D187. Residue H182 is the Proton donor/acceptor of the active site.

The protein belongs to the RNase T family. In terms of assembly, homodimer. The cofactor is Mg(2+).

In terms of biological role, trims short 3' overhangs of a variety of RNA species, leaving a one or two nucleotide 3' overhang. Responsible for the end-turnover of tRNA: specifically removes the terminal AMP residue from uncharged tRNA (tRNA-C-C-A). Also appears to be involved in tRNA biosynthesis. The sequence is that of Ribonuclease T from Wigglesworthia glossinidia brevipalpis.